Consider the following 208-residue polypeptide: FMN-dependent NADH:quinone oxidoreductase (208 aa).

Residues 17–19, 99–102, and 143–146 each bind FMN; these read SNS, MWNL, and SRGG.

This sequence belongs to the azoreductase type 1 family. In terms of assembly, homodimer. FMN serves as cofactor.

The enzyme catalyses 2 a quinone + NADH + H(+) = 2 a 1,4-benzosemiquinone + NAD(+). It carries out the reaction N,N-dimethyl-1,4-phenylenediamine + anthranilate + 2 NAD(+) = 2-(4-dimethylaminophenyl)diazenylbenzoate + 2 NADH + 2 H(+). Functionally, quinone reductase that provides resistance to thiol-specific stress caused by electrophilic quinones. In terms of biological role, also exhibits azoreductase activity. Catalyzes the reductive cleavage of the azo bond in aromatic azo compounds to the corresponding amines. This chain is FMN-dependent NADH:quinone oxidoreductase, found in Staphylococcus aureus (strain Mu50 / ATCC 700699).